The following is a 311-amino-acid chain: Retron Ec78 reverse transcriptase (311 aa).

The region spanning 15–241 is the Reverse transcriptase domain; the sequence is DSGISAFLVT…HNRHVTGVTI (227 aa). Residues Asp96, Asp187, and Asp188 each contribute to the Mg(2+) site.

Belongs to the bacterial reverse transcriptase family.

The catalysed reaction is DNA(n) + a 2'-deoxyribonucleoside 5'-triphosphate = DNA(n+1) + diphosphate. Functionally, reverse transcriptase (RT) component of antiviral defense system retron Ec78, composed of a non-coding RNA (ncRNA), this reverse transcriptase (RT), a probable ATPase and a putative HNH endonuclease. Expression of retron Ec78 confers protection against bacteriophage T5. At multiplicity of infection (MOI) of 0.02 cultures slow growth when infected with T5 but do not collapse, at MOI 2 cultures enter growth stasis. Responsible for synthesis of msDNA-Ec78 (a linear ssDNA with a 5'-terminal phosphate residue). Unlike most known msDNAs the mature product does not have an RNA component. The retron transcript serves as primer and template for the reaction, and codes for the RT. Not mutagenic when cloned in E.coli. It is thought to be synthesized as a branched RNA with a 2',5'-phosphodiester linkage to ssDNA; the linkage is cleaved endonucleolytically by ExoVII (xseA-xseB) leaving the observed mature 5'-ssDNA terminus. Overexpression of the ncRNA and RT, which leads to increased levels of msDNA, is not mutagenic in vivo. As the stem in the msDNA does not have a mismatch it probably does not bind or sequester MutS and/or MutL. The polypeptide is Retron Ec78 reverse transcriptase (Escherichia coli).